Consider the following 395-residue polypeptide: 8-amino-7-oxononanoate synthase (395 aa).

R24 is a substrate binding site. 111–112 (GF) provides a ligand contact to pyridoxal 5'-phosphate. Residue H136 participates in substrate binding. Residues S184, 209–212 (DDAH), and 240–243 (TLSK) contribute to the pyridoxal 5'-phosphate site. K243 is modified (N6-(pyridoxal phosphate)lysine). T357 is a binding site for substrate.

Belongs to the class-II pyridoxal-phosphate-dependent aminotransferase family. BioF subfamily. Homodimer. Requires pyridoxal 5'-phosphate as cofactor.

The catalysed reaction is 6-carboxyhexanoyl-[ACP] + L-alanine + H(+) = (8S)-8-amino-7-oxononanoate + holo-[ACP] + CO2. Its pathway is cofactor biosynthesis; biotin biosynthesis. In terms of biological role, catalyzes the decarboxylative condensation of pimeloyl-[acyl-carrier protein] and L-alanine to produce 8-amino-7-oxononanoate (AON), [acyl-carrier protein], and carbon dioxide. The protein is 8-amino-7-oxononanoate synthase of Alkaliphilus metalliredigens (strain QYMF).